A 430-amino-acid chain; its full sequence is tRNA(Ile)-lysidine synthase (430 aa).

Ser27 to Ser32 contacts ATP.

This sequence belongs to the tRNA(Ile)-lysidine synthase family.

It is found in the cytoplasm. The catalysed reaction is cytidine(34) in tRNA(Ile2) + L-lysine + ATP = lysidine(34) in tRNA(Ile2) + AMP + diphosphate + H(+). Functionally, ligates lysine onto the cytidine present at position 34 of the AUA codon-specific tRNA(Ile) that contains the anticodon CAU, in an ATP-dependent manner. Cytidine is converted to lysidine, thus changing the amino acid specificity of the tRNA from methionine to isoleucine. This chain is tRNA(Ile)-lysidine synthase, found in Rickettsia akari (strain Hartford).